The primary structure comprises 404 residues: Riboflavin biosynthesis protein RibBA (404 aa).

The interval 1–204 is DHBP synthase; sequence MEELKLNTIE…IRDLIAYRLK (204 aa). Residues 30-31, aspartate 35, 143-147, and glutamate 167 contribute to the D-ribulose 5-phosphate site; these read RE and RAGHT. Residue glutamate 31 coordinates Mg(2+). Residue histidine 146 participates in Mg(2+) binding. Residues 205–404 form a GTP cyclohydrolase II region; it reads QESLVEKGVE…RMGHTLHFNK (200 aa). A GTP-binding site is contributed by 255–259; it reads RVHSS. Residues cysteine 260, cysteine 271, and cysteine 273 each contribute to the Zn(2+) site. GTP is bound by residues glutamine 276, 298 to 300, and threonine 320; that span reads EGR. Aspartate 332 functions as the Proton acceptor; for GTP cyclohydrolase activity in the catalytic mechanism. Arginine 334 functions as the Nucleophile; for GTP cyclohydrolase activity in the catalytic mechanism. GTP is bound by residues threonine 355 and lysine 360.

It in the N-terminal section; belongs to the DHBP synthase family. The protein in the C-terminal section; belongs to the GTP cyclohydrolase II family. Mg(2+) serves as cofactor. Requires Mn(2+) as cofactor. Zn(2+) is required as a cofactor.

It catalyses the reaction D-ribulose 5-phosphate = (2S)-2-hydroxy-3-oxobutyl phosphate + formate + H(+). The catalysed reaction is GTP + 4 H2O = 2,5-diamino-6-hydroxy-4-(5-phosphoribosylamino)-pyrimidine + formate + 2 phosphate + 3 H(+). It functions in the pathway cofactor biosynthesis; riboflavin biosynthesis; 2-hydroxy-3-oxobutyl phosphate from D-ribulose 5-phosphate: step 1/1. The protein operates within cofactor biosynthesis; riboflavin biosynthesis; 5-amino-6-(D-ribitylamino)uracil from GTP: step 1/4. Functionally, catalyzes the conversion of D-ribulose 5-phosphate to formate and 3,4-dihydroxy-2-butanone 4-phosphate. In terms of biological role, catalyzes the conversion of GTP to 2,5-diamino-6-ribosylamino-4(3H)-pyrimidinone 5'-phosphate (DARP), formate and pyrophosphate. This is Riboflavin biosynthesis protein RibBA from Phocaeicola vulgatus (strain ATCC 8482 / DSM 1447 / JCM 5826 / CCUG 4940 / NBRC 14291 / NCTC 11154) (Bacteroides vulgatus).